A 266-amino-acid polypeptide reads, in one-letter code: 5'-nucleotidase SurE (266 aa).

A divalent metal cation contacts are provided by Asp8, Asp9, Ser39, and Asn93.

This sequence belongs to the SurE nucleotidase family. A divalent metal cation is required as a cofactor.

The protein resides in the cytoplasm. It catalyses the reaction a ribonucleoside 5'-phosphate + H2O = a ribonucleoside + phosphate. In terms of biological role, nucleotidase that shows phosphatase activity on nucleoside 5'-monophosphates. In Pyrobaculum arsenaticum (strain DSM 13514 / JCM 11321 / PZ6), this protein is 5'-nucleotidase SurE.